The primary structure comprises 1293 residues: MSQHLPLVAAQPGIWMAEKLSELPSAWSVAHYVELTGEVDAPLLARAVVAGLAQADTLRMRFTEDNGEVWQWVDDALIFELPEIIDLRTNIDPHGTAQALMQADLQQDLRVDSGKPLVFHQLIQVADNRWYWYQRYHHLLVDGFSFPAITRQIANIYCALLRGEQTPASPFTPFADVVEEYQQYRESEAWQRDAAFWAEQRRQLPPPASLSPAPLAGRSASADILRLKLEFTDGEFRQLATQLSGVQRTDLALALAAFWLGRLCNRMDYAAGFIFMRRLGSAALTATGPVLNVLPLGIHIAAQETLPELATRLAAQLKKMRRHQRYDAEQIVRDSGRAAGDEPLFGPVLNIKVFDYQLDIPGVQAQTHTLATGPVNDLELALFPDEHGDLSIEILANKQHYDEPTLIQHAERLKMLIAQFAADPALLCGDVDIMLPGEYAQLAQINATQVEIPETTLSALVAEQAAKTPDAPALADARYQFSYREMREQVVALANLLREHGVKPGDSVAVALPRSVFLTLALHAIVEAGAAWLPLDTGYPDDRLKMMLEDARPSLLITTDDQLPRFADVPDLTNLCYNAPLTPQGSAPLQLSQPHHTAYIIFTSGSTGRPKGVMVGQTAIVNRLLWMQNHYPLTGEDVVAQKTPCSFDVSVWEFFWPFIAGAKLVMAEPEAHRDPLAMQQFFAEYGVTTTHFVPSMLAAFVASLTPQTARQNCATLKQVFCSGEALPADLCREWQQLTGAPLHNLYGPTEAAVDVSWYPAFGEELAQVRGSSVPIGYPVWNTGLRILDAMMHPVPPGVAGDLYLTGIQLAQGYLGRPDLTASRFIADPFVPGERMYRTGDVARWLDNGAVEYLGRSDDQLKIRGQRIELGEIDRVMQALPDVEQAVTHACVINQAAATGGDARQLVGYLVSQSGLPLDTSALQAQLRETLPPHMAPVVLLQLPQLPLSANGKLDRKALPLPELKAQTPGRAPKAGSETIIAAAFASLLGCDVQDADADFFALGGHSLLAMKLAAQLSRQFARQVTPGQVMVASTVAKLATIIDGEEDSSRRMGFETILPLREGNGPTLFCFHPASGFAWQFSVLSRYLDPLWSIIGIQSPRPHGPMQTATNLDEVCEAHLATLLEQQPHGPYYLLGYSLGGTLAQGIAARLRARGEQVAFLGLLDTWPPETQNWQEKEANGLDPEVLAEINREREAFLAAQQGSTSTELFTTIEGNYADAVRLLTTAHSVPFDGKATLFVAERTLQEGMSPERAWSPWIAELDIYRQDCAHVDIISPGAFEKIGPIIRATLNR.

Positions 1–301 (MSQHLPLVAA…NVLPLGIHIA (301 aa)) are elongation/condensation. The adenylation stretch occupies residues 482-887 (SYREMREQVV…ALPDVEQAVT (406 aa)). One can recognise a Carrier domain in the interval 971–1046 (APKAGSETII…KLATIIDGEE (76 aa)). Ser-1006 bears the O-(pantetheine 4'-phosphoryl)serine mark. The thioesterase stretch occupies residues 1066–1293 (PTLFCFHPAS…GPIIRATLNR (228 aa)). The active-site Proton acceptor; for thioesterase activity is His-1271.

The protein belongs to the ATP-dependent AMP-binding enzyme family. EntF subfamily. In terms of assembly, proteins EntB, EntD, EntE and EntF are the component of the enterobactin synthase. Components probably do not form a stable complex. EntF acts as a catalytic monomer. It depends on pantetheine 4'-phosphate as a cofactor. 4'-phosphopantetheine is transferred from CoA to a specific serine of apo-EntF by EntD. Holo-EntF so formed is then acylated with seryl-AMP.

Its subcellular location is the cytoplasm. It carries out the reaction 3 2,3-dihydroxybenzoate + 3 L-serine + 6 ATP = enterobactin + 6 AMP + 6 diphosphate + 4 H(+). The enzyme catalyses holo-[peptidyl-carrier protein] + L-serine + ATP = L-seryl-[peptidyl-carrier protein] + AMP + diphosphate. Its pathway is siderophore biosynthesis; enterobactin biosynthesis. Its function is as follows. Involved in the biosynthesis of the siderophore enterobactin (enterochelin), which is a macrocyclic trimeric lactone of N-(2,3-dihydroxybenzoyl)-serine. EntF catalyzes the activation of L-serine via ATP-dependent PPi exchange reaction to form seryladenylate. Activated L-serine is loaded onto the peptidyl carrier domain via a thioester linkage to the phosphopanthetheine moiety, forming seryl-S-Ppant-EntF. EntF acts then as the sole catalyst for the formation of the three amide and three ester linkages found in enterobactin, using seryladenylate and 2,3-dihydroxybenzoate-S-Ppant-EntB (DHB-S-Ppant-EntB) as substrates, via the formation of a DHB-Ser-S-Ppant-EntF intermediate. This is Enterobactin synthase component F (entF) from Escherichia coli O157:H7.